Here is a 359-residue protein sequence, read N- to C-terminus: 3-dehydroquinate synthase (359 aa).

NAD(+) is bound by residues 106-110 (GVVGD), 130-131 (TS), Lys-143, and Lys-152. Residues Glu-185, His-246, and His-263 each coordinate Zn(2+).

This sequence belongs to the sugar phosphate cyclases superfamily. Dehydroquinate synthase family. Co(2+) serves as cofactor. The cofactor is Zn(2+). Requires NAD(+) as cofactor.

It localises to the cytoplasm. The enzyme catalyses 7-phospho-2-dehydro-3-deoxy-D-arabino-heptonate = 3-dehydroquinate + phosphate. The protein operates within metabolic intermediate biosynthesis; chorismate biosynthesis; chorismate from D-erythrose 4-phosphate and phosphoenolpyruvate: step 2/7. Catalyzes the conversion of 3-deoxy-D-arabino-heptulosonate 7-phosphate (DAHP) to dehydroquinate (DHQ). The chain is 3-dehydroquinate synthase from Clostridium kluyveri (strain ATCC 8527 / DSM 555 / NBRC 12016 / NCIMB 10680 / K1).